The chain runs to 185 residues: MIDDIKSDSEERMSRAIEALGTHFNKIRTGRAHPSILDGVMVSYYGSATPLSQVANVTVLDARTLSISPWEKNIVPEIEKAIMKSDLGLNPVTTGDLIRVPMPMLTEETRKGYIKRARAEAESARVSIRNVRRDALAEVKALVKDKEISEDDERRAADEIQQITNKYVAEVDKALSAKEKDLMEI.

It belongs to the RRF family.

The protein resides in the cytoplasm. In terms of biological role, responsible for the release of ribosomes from messenger RNA at the termination of protein biosynthesis. May increase the efficiency of translation by recycling ribosomes from one round of translation to another. This chain is Ribosome-recycling factor, found in Saccharophagus degradans (strain 2-40 / ATCC 43961 / DSM 17024).